Here is a 517-residue protein sequence, read N- to C-terminus: Ubiquitin carboxyl-terminal hydrolase 30 (517 aa).

The Mitochondrial intermembrane segment spans residues 1–35; that stretch reads MLSSRAQAARTAADKALQRFLRTGAAVRYKVMKNW. Residues 36–56 form a helical membrane-spanning segment; sequence GVIGGIAAALAAGIYVIWGPI. Residues 57–517 lie on the Cytoplasmic side of the membrane; the sequence is TERKKRRKGL…QQGREYRSEE (461 aa). A USP domain is found at 68-502; the sequence is PGLVNLGNTC…SAYLLFYERV (435 aa). Cys77 serves as the catalytic Nucleophile. Residues 198–221 form a disordered region; sequence MAPRQVTCHTRGSPHPTTNHWKSQ. The segment covering 204–218 has biased composition (polar residues); it reads TCHTRGSPHPTTNHW. Glycyl lysine isopeptide (Lys-Gly) (interchain with G-Cter in ubiquitin) cross-links involve residues Lys235 and Lys289. The segment at 364–395 is disordered; that stretch reads SQHGPKATENPGSAPEVQDAQAAPKPGLSQPG. His452 (proton acceptor) is an active-site residue.

The protein belongs to the peptidase C19 family. Post-translationally, ubiquitinated by parkin (PRKN) at Lys-235 and Lys-289, leading to its degradation.

Its subcellular location is the mitochondrion outer membrane. It carries out the reaction Thiol-dependent hydrolysis of ester, thioester, amide, peptide and isopeptide bonds formed by the C-terminal Gly of ubiquitin (a 76-residue protein attached to proteins as an intracellular targeting signal).. Its activity is regulated as follows. Inhibited by the diterpenoid derivative 15-oxospiramilactone (S3). In terms of biological role, deubiquitinating enzyme tethered to the mitochondrial outer membrane that acts as a key inhibitor of mitophagy by counteracting the action of parkin (PRKN): hydrolyzes ubiquitin attached by parkin on target proteins, such as RHOT1/MIRO1 and TOMM20, thereby blocking parkin's ability to drive mitophagy. Preferentially cleaves 'Lys-6'- and 'Lys-11'-linked polyubiquitin chains, 2 types of linkage that participate in mitophagic signaling. Does not cleave efficiently polyubiquitin phosphorylated at 'Ser-65'. Acts as negative regulator of mitochondrial fusion by mediating deubiquitination of MFN1 and MFN2. In Mus musculus (Mouse), this protein is Ubiquitin carboxyl-terminal hydrolase 30 (Usp30).